A 146-amino-acid polypeptide reads, in one-letter code: Hemoglobin subunit beta-1 (146 aa).

Ser-1 is modified (N-acetylserine). Positions 2–146 (FLSAEEKGLV…VASALAHRYH (145 aa)) constitute a Globin domain. Lys-17 carries the N6-succinyllysine modification. A phosphoserine mark is found at Ser-44 and Ser-50. An N6-succinyllysine modification is found at Lys-59. Positions 63 and 92 each coordinate heme b. Asymmetric dimethylarginine is present on Arg-104.

Belongs to the globin family. Heterotetramer of two alpha chains and two beta chains. Red blood cells.

Involved in oxygen transport from the lung to the various peripheral tissues. The sequence is that of Hemoglobin subunit beta-1 (HBB1) from Panthera leo (Lion).